The following is a 52-amino-acid chain: Sporulation inhibitor sda (52 aa).

Forms a stable heterotetramer with KinA (comprising two molecules of each protein), by binding to the KinA dimerization/phosphotransfer domain.

Mediates a developmental checkpoint inhibiting initiation of sporulation (by preventing phosphorylation of spo0A) in response to defects in the replication initiation machinery. Inhibits autophosphorylation of the histidine protein kinase KinA, forming a molecular barricade that prevents productive interaction between the ATP-binding site in the catalytic domain and the phosphorylatable His in the phosphotransfer domain of KinA. Probably also inhibits the activity of KinB, but has relatively little effect on KinC. Has at least one target in vivo in addition to KinA as sda does not require KinA to inhibit sporulation. This Bacillus subtilis (strain 168) protein is Sporulation inhibitor sda (sda).